Here is a 262-residue protein sequence, read N- to C-terminus: tRNA pseudouridine synthase A (262 aa).

Asp-51 (nucleophile) is an active-site residue. Tyr-109 is a binding site for substrate.

Belongs to the tRNA pseudouridine synthase TruA family. As to quaternary structure, homodimer.

The enzyme catalyses uridine(38/39/40) in tRNA = pseudouridine(38/39/40) in tRNA. In terms of biological role, formation of pseudouridine at positions 38, 39 and 40 in the anticodon stem and loop of transfer RNAs. In Legionella pneumophila (strain Paris), this protein is tRNA pseudouridine synthase A.